We begin with the raw amino-acid sequence, 352 residues long: Molybdenum import ATP-binding protein ModC (352 aa).

Positions 1-229 constitute an ABC transporter domain; sequence MLQLDFHQQL…SALRPWLPKD (229 aa). 31–38 contacts ATP; the sequence is GVSGAGKT. A Mop domain is found at 289-352; the sequence is KSSIRNVLRA…AQIKSVSITA (64 aa).

It belongs to the ABC transporter superfamily. Molybdate importer (TC 3.A.1.8) family. As to quaternary structure, the complex is composed of two ATP-binding proteins (ModC), two transmembrane proteins (ModB) and a solute-binding protein (ModA).

The protein resides in the cell inner membrane. The catalysed reaction is molybdate(out) + ATP + H2O = molybdate(in) + ADP + phosphate + H(+). Part of the ABC transporter complex ModABC involved in molybdenum import. Responsible for energy coupling to the transport system. This is Molybdenum import ATP-binding protein ModC from Pectobacterium atrosepticum (strain SCRI 1043 / ATCC BAA-672) (Erwinia carotovora subsp. atroseptica).